The chain runs to 93 residues: Large ribosomal subunit protein uL23 (93 aa).

This sequence belongs to the universal ribosomal protein uL23 family. Part of the 50S ribosomal subunit. Contacts protein L29, and trigger factor when it is bound to the ribosome.

In terms of biological role, one of the early assembly proteins it binds 23S rRNA. One of the proteins that surrounds the polypeptide exit tunnel on the outside of the ribosome. Forms the main docking site for trigger factor binding to the ribosome. This chain is Large ribosomal subunit protein uL23, found in Campylobacter hominis (strain ATCC BAA-381 / DSM 21671 / CCUG 45161 / LMG 19568 / NCTC 13146 / CH001A).